The chain runs to 215 residues: Pyrrolidone-carboxylate peptidase (215 aa).

Active-site residues include Glu-80, Cys-143, and His-167.

It belongs to the peptidase C15 family. As to quaternary structure, homotetramer.

It localises to the cytoplasm. It catalyses the reaction Release of an N-terminal pyroglutamyl group from a polypeptide, the second amino acid generally not being Pro.. Functionally, removes 5-oxoproline from various penultimate amino acid residues except L-proline. The sequence is that of Pyrrolidone-carboxylate peptidase from Yersinia pestis bv. Antiqua (strain Antiqua).